The following is a 216-amino-acid chain: Protein-L-isoaspartate O-methyltransferase (216 aa).

Ser-65 is a catalytic residue.

Belongs to the methyltransferase superfamily. L-isoaspartyl/D-aspartyl protein methyltransferase family.

The protein resides in the cytoplasm. The catalysed reaction is [protein]-L-isoaspartate + S-adenosyl-L-methionine = [protein]-L-isoaspartate alpha-methyl ester + S-adenosyl-L-homocysteine. Catalyzes the methyl esterification of L-isoaspartyl residues in peptides and proteins that result from spontaneous decomposition of normal L-aspartyl and L-asparaginyl residues. It plays a role in the repair and/or degradation of damaged proteins. This chain is Protein-L-isoaspartate O-methyltransferase, found in Chlorobium phaeobacteroides (strain DSM 266 / SMG 266 / 2430).